A 241-amino-acid polypeptide reads, in one-letter code: tRNA (guanine-N(7)-)-methyltransferase (241 aa).

Residues 1 to 20 are disordered; it reads MTESNDTPIQPEAGDERQHR. S-adenosyl-L-methionine is bound by residues E71, E96, D123, and D146. D146 is a catalytic residue. Substrate contacts are provided by residues K150, D182, and 219–222; that span reads TKFE.

The protein belongs to the class I-like SAM-binding methyltransferase superfamily. TrmB family.

It carries out the reaction guanosine(46) in tRNA + S-adenosyl-L-methionine = N(7)-methylguanosine(46) in tRNA + S-adenosyl-L-homocysteine. It participates in tRNA modification; N(7)-methylguanine-tRNA biosynthesis. Its function is as follows. Catalyzes the formation of N(7)-methylguanine at position 46 (m7G46) in tRNA. In Pseudomonas fluorescens (strain ATCC BAA-477 / NRRL B-23932 / Pf-5), this protein is tRNA (guanine-N(7)-)-methyltransferase.